The primary structure comprises 248 residues: 2,3-bisphosphoglycerate-dependent phosphoglycerate mutase (248 aa).

Substrate-binding positions include 8–15, 21–22, R60, 87–90, K98, 114–115, and 183–184; these read RHGESTWN, TG, ERHY, RR, and GN. Catalysis depends on H9, which acts as the Tele-phosphohistidine intermediate. The active-site Proton donor/acceptor is the E87.

The protein belongs to the phosphoglycerate mutase family. BPG-dependent PGAM subfamily. As to quaternary structure, homodimer.

It carries out the reaction (2R)-2-phosphoglycerate = (2R)-3-phosphoglycerate. It participates in carbohydrate degradation; glycolysis; pyruvate from D-glyceraldehyde 3-phosphate: step 3/5. In terms of biological role, catalyzes the interconversion of 2-phosphoglycerate and 3-phosphoglycerate. In Paraburkholderia phymatum (strain DSM 17167 / CIP 108236 / LMG 21445 / STM815) (Burkholderia phymatum), this protein is 2,3-bisphosphoglycerate-dependent phosphoglycerate mutase.